The following is an 878-amino-acid chain: MLLGASWLCASKAAATAARGEGEDRQGEQQRGAQARTEEDMDESSLLDLLECSVCLERLDTTAKVLPCQHTFCRRCLESIVCSRHELRCPECRILVGCGVDELPANILLVRLLDGIRQRPRTGASPGSSPPARPGPGTFSALAGGAGGATGSPPCSPVFLSAAAGSSTSSLCDVATNRSVPVAKTLSQLPYAKALYSYEGKEPGDLKFNKGDIIILRRKVDENWYHGELQGMHGFLPASYIQCVRPLPQALPQGKALYDFEMKDRDQDKDCLTFTKDEVLTVIRRVDDNWAEGMLGDKIGIFPLLYVELNDSAKQLIEMDKLCPAATTAYNYDALLSSDPSTVASVAPGPTLSSSGAVSAFQRRVDSKKNAKKRHSFTALSVTHKSSQAASHRHSMEISAPVLISSSDPRAAARIGELAHLSCTVPTQDSSSAGPVPTALPRAAAVAGEQGMSPKVQLPLNVYLALYAYKPQKNDELELRKGEMYRVLEKCQDGWFKGASLKTGVSGVFPGNYVTPVSRVPGGGAGLPWNNVLGGSPLAKGMATIMHPGGGSLSSPATAARSALPLTTLQDHMQHPATSLPTGSCLRHSAQPTASQAGDTTIPTATHASAQALDRPTATVSPLRTQTSPSRLPSTGLRPRSVASPQHGQQSPAQMCPRPAIPFTSAASAITPPNVSAANLSGEVGGTPISGLSTPSLINTGFKPDDKKNEKKEKKSGLLKLLAGASTKKKSRSPPSVSPTHDPQSAMDTSLQGAMGPEVSPLTVHGRAGSCPIESEMQGAIGLEPLHRKAGSLDLNFSLSPSRQATLSMASIRPEPKPLPRERYRVVVSYPPQSEAEIELKEGDIVFVHKKHEDGWFKGTLQRNGRTGLFPGSFVESF.

The segment at 19–40 (RGEGEDRQGEQQRGAQARTEED) is disordered. The RING-type zinc-finger motif lies at 52–93 (CSVCLERLDTTAKVLPCQHTFCRRCLESIVCSRHELRCPECR). The segment at 120-145 (PRTGASPGSSPPARPGPGTFSALAGG) is disordered. SH3 domains are found at residues 187-246 (SQLP…CVRP) and 249-312 (QALP…LNDS). Positions 364–433 (RVDSKKNAKK…TVPTQDSSSA (70 aa)) are interaction with RAC1. S395 is modified (phosphoserine). The SH3 3 domain occupies 458–519 (LPLNVYLALY…PGNYVTPVSR (62 aa)). 2 disordered regions span residues 574–659 (QHPA…CPRP) and 688–758 (PISG…MGPE). Composition is skewed to polar residues over residues 590 to 609 (AQPT…THAS), 618 to 633 (ATVS…SRLP), 643 to 653 (ASPQHGQQSPA), and 690 to 699 (SGLSTPSLIN). The span at 703 to 716 (KPDDKKNEKKEKKS) shows a compositional bias: basic and acidic residues. Positions 741–752 (HDPQSAMDTSLQ) are enriched in polar residues. Position 792 is a phosphoserine (S792). In terms of domain architecture, SH3 4 spans 819–878 (LPRERYRVVVSYPPQSEAEIELKEGDIVFVHKKHEDGWFKGTLQRNGRTGLFPGSFVESF).

The protein belongs to the SH3RF family. Interacts (via SH3 domain 3) with PAK2. Interacts with RAC1 (GTP-bound form). In terms of processing, autoubiquitinated.

It carries out the reaction S-ubiquitinyl-[E2 ubiquitin-conjugating enzyme]-L-cysteine + [acceptor protein]-L-lysine = [E2 ubiquitin-conjugating enzyme]-L-cysteine + N(6)-ubiquitinyl-[acceptor protein]-L-lysine.. It participates in protein modification; protein ubiquitination. Its function is as follows. Has E3 ubiquitin-protein ligase activity. This Mus musculus (Mouse) protein is E3 ubiquitin-protein ligase SH3RF3 (Sh3rf3).